A 663-amino-acid chain; its full sequence is UvrABC system protein B (663 aa).

Positions 1–10 (MIDKRDDKPF) are enriched in basic and acidic residues. Residues 1–23 (MIDKRDDKPFKLKSKYKPSGDQP) are disordered. The Helicase ATP-binding domain maps to 31–418 (DNIEGGEKAQ…TNTIIEQIIR (388 aa)). 44 to 51 (GATGTGKT) lines the ATP pocket. Residues 97 to 120 (YYDYYQPEAYVPSSDTYIEKDSSV) carry the Beta-hairpin motif. Residues 435–601 (QMDDLLGEIN…TIKKDIRGLI (167 aa)) enclose the Helicase C-terminal domain. Positions 627–662 (KEAINALQKQMQEAAELLDFELAAQMRDLILELKLM) constitute a UVR domain.

This sequence belongs to the UvrB family. Forms a heterotetramer with UvrA during the search for lesions. Interacts with UvrC in an incision complex.

The protein localises to the cytoplasm. The UvrABC repair system catalyzes the recognition and processing of DNA lesions. A damage recognition complex composed of 2 UvrA and 2 UvrB subunits scans DNA for abnormalities. Upon binding of the UvrA(2)B(2) complex to a putative damaged site, the DNA wraps around one UvrB monomer. DNA wrap is dependent on ATP binding by UvrB and probably causes local melting of the DNA helix, facilitating insertion of UvrB beta-hairpin between the DNA strands. Then UvrB probes one DNA strand for the presence of a lesion. If a lesion is found the UvrA subunits dissociate and the UvrB-DNA preincision complex is formed. This complex is subsequently bound by UvrC and the second UvrB is released. If no lesion is found, the DNA wraps around the other UvrB subunit that will check the other stand for damage. This chain is UvrABC system protein B, found in Streptococcus pyogenes serotype M3 (strain ATCC BAA-595 / MGAS315).